Here is a 490-residue protein sequence, read N- to C-terminus: UDP-N-acetylmuramoyl-L-alanyl-D-glutamate--2,6-diaminopimelate ligase (490 aa).

Position 31 (S31) interacts with UDP-N-acetyl-alpha-D-muramoyl-L-alanyl-D-glutamate. Position 109 to 115 (109 to 115) interacts with ATP; sequence GTNGKTS. Residues N150, 151–152, S178, and R186 each bind UDP-N-acetyl-alpha-D-muramoyl-L-alanyl-D-glutamate; that span reads TT. K218 bears the N6-carboxylysine mark. Residues R384, 408-411, G458, and E462 each bind meso-2,6-diaminopimelate; that span reads DNPR. Positions 408–411 match the Meso-diaminopimelate recognition motif motif; sequence DNPR.

Belongs to the MurCDEF family. MurE subfamily. Requires Mg(2+) as cofactor. Post-translationally, carboxylation is probably crucial for Mg(2+) binding and, consequently, for the gamma-phosphate positioning of ATP.

Its subcellular location is the cytoplasm. The catalysed reaction is UDP-N-acetyl-alpha-D-muramoyl-L-alanyl-D-glutamate + meso-2,6-diaminopimelate + ATP = UDP-N-acetyl-alpha-D-muramoyl-L-alanyl-gamma-D-glutamyl-meso-2,6-diaminopimelate + ADP + phosphate + H(+). Its pathway is cell wall biogenesis; peptidoglycan biosynthesis. In terms of biological role, catalyzes the addition of meso-diaminopimelic acid to the nucleotide precursor UDP-N-acetylmuramoyl-L-alanyl-D-glutamate (UMAG) in the biosynthesis of bacterial cell-wall peptidoglycan. The chain is UDP-N-acetylmuramoyl-L-alanyl-D-glutamate--2,6-diaminopimelate ligase from Bacillus velezensis (strain DSM 23117 / BGSC 10A6 / LMG 26770 / FZB42) (Bacillus amyloliquefaciens subsp. plantarum).